A 378-amino-acid chain; its full sequence is Alanine racemase (378 aa).

The active-site Proton acceptor; specific for D-alanine is Lys35. Lys35 bears the N6-(pyridoxal phosphate)lysine mark. A substrate-binding site is contributed by Arg133. The Proton acceptor; specific for L-alanine role is filled by Tyr266. Met314 is a binding site for substrate.

Belongs to the alanine racemase family. Pyridoxal 5'-phosphate is required as a cofactor.

It catalyses the reaction L-alanine = D-alanine. It participates in amino-acid biosynthesis; D-alanine biosynthesis; D-alanine from L-alanine: step 1/1. Its function is as follows. Catalyzes the interconversion of L-alanine and D-alanine. May also act on other amino acids. The sequence is that of Alanine racemase (alr) from Beutenbergia cavernae (strain ATCC BAA-8 / DSM 12333 / CCUG 43141 / JCM 11478 / NBRC 16432 / NCIMB 13614 / HKI 0122).